The primary structure comprises 853 residues: DNA mismatch repair protein MutS (853 aa).

614 to 621 lines the ATP pocket; that stretch reads GPNMGGKS.

It belongs to the DNA mismatch repair MutS family.

Its function is as follows. This protein is involved in the repair of mismatches in DNA. It is possible that it carries out the mismatch recognition step. This protein has a weak ATPase activity. The protein is DNA mismatch repair protein MutS of Shigella boydii serotype 18 (strain CDC 3083-94 / BS512).